The chain runs to 1180 residues: Protocadherin-12 (1180 aa).

Residues 1–17 (MMLLLPFLLGLLGPGSY) form the signal peptide. Residues 18-716 (LFISGDCQEV…HEPGVLSTPA (699 aa)) are Extracellular-facing. 5 consecutive Cadherin domains span residues 28 to 135 (ATVM…QPQF), 136 to 244 (PKDE…SPVF), 245 to 352 (AESS…APSI), 355 to 460 (TWAS…APVF), and 461 to 565 (EKSR…APEV). Residues N265 and N415 are each glycosylated (N-linked (GlcNAc...) asparagine). N-linked (GlcNAc...) asparagine glycans are attached at residues N582, N659, and N662. The Cadherin 6 domain occupies 600–711 (PAGTGIPPKA…LRDSAHEPGV (112 aa)). Residues 717 to 737 (LALICLAVLLAIFGLLLALFV) form a helical membrane-spanning segment. Residues 738–1180 (SICRTERKDN…ESRLGCGRNL (443 aa)) are Cytoplasmic-facing. 2 disordered regions span residues 857–930 (NASR…GPHQ) and 973–1026 (QFQP…PEED). Phosphoserine is present on S859. Residues 904 to 918 (PASSATLRRQRNFNG) show a composition bias toward polar residues. The span at 1014–1026 (PDLEEGPPSPEED) shows a compositional bias: acidic residues. S1064 carries the post-translational modification Phosphoserine. Over residues 1076 to 1093 (SSPDATTSEEPRTFQTFG) the composition is skewed to polar residues. Disordered stretches follow at residues 1076–1104 (SSPD…ELSP) and 1156–1180 (SGAS…GRNL).

Post-translationally, N-glycosylated. In terms of processing, cleaved by ADAM10 close to the transmembrane domain to release the Protocadherin-12, secreted form in the serum. Cleavage results in reduced cellular adhesion in a cell migration assay. As to expression, expressed in endothelial cells: localizes in vasculogenic rather than angiogenic endothelium. Strongly expressed in a subset of invasive cells of the placenta, named glycogen-rich trophoblasts cells (at protein level). glycogen-rich trophoblasts cells originate from the from the ectoplacental cone where they rapidly form tight islets (at protein level). In adult mice, present at high level in mesangial cells of kidney glomeruli, while expression was not detected in other types of perivascular cells.

Its subcellular location is the cell membrane. It is found in the cell junction. It localises to the secreted. Cellular adhesion molecule that may play an important role in cell-cell interactions at interendothelial junctions. Acts as a regulator of cell migration, probably via increasing cell-cell adhesion. Promotes homotypic calcium-dependent aggregation and adhesion and clusters at intercellular junctions. Unable to bind to catenins, weakly associates with the cytoskeleton. The polypeptide is Protocadherin-12 (Mus musculus (Mouse)).